The primary structure comprises 76 residues: UPF0346 protein lhv_1069 (76 aa).

The protein belongs to the UPF0346 family.

This Lactobacillus helveticus (strain DPC 4571) protein is UPF0346 protein lhv_1069.